A 140-amino-acid polypeptide reads, in one-letter code: UPF0132 membrane protein MJ1527 (140 aa).

Transmembrane regions (helical) follow at residues 40-60 (MEGVLCYLLFWISGLIFLLLE), 70-90 (AMQSFITFLSLNLIAIIVSAI), and 92-112 (IIGWVASTLINIAIIILWIVG).

This sequence belongs to the UPF0132 family.

It localises to the cell membrane. The sequence is that of UPF0132 membrane protein MJ1527 from Methanocaldococcus jannaschii (strain ATCC 43067 / DSM 2661 / JAL-1 / JCM 10045 / NBRC 100440) (Methanococcus jannaschii).